Consider the following 238-residue polypeptide: ATP-dependent dethiobiotin synthetase BioD (238 aa).

13 to 18 (DIGKTF) is a binding site for ATP. Mg(2+) is bound at residue Thr17. The active site involves Lys38. Ser42 serves as a coordination point for substrate. Residues Asp55, 116-119 (EGSG), 209-211 (PRI), and Asn216 each bind ATP. Asp55 and Glu116 together coordinate Mg(2+).

The protein belongs to the dethiobiotin synthetase family. As to quaternary structure, homodimer. Requires Mg(2+) as cofactor.

It localises to the cytoplasm. The catalysed reaction is (7R,8S)-7,8-diammoniononanoate + CO2 + ATP = (4R,5S)-dethiobiotin + ADP + phosphate + 3 H(+). Its pathway is cofactor biosynthesis; biotin biosynthesis; biotin from 7,8-diaminononanoate: step 1/2. In terms of biological role, catalyzes a mechanistically unusual reaction, the ATP-dependent insertion of CO2 between the N7 and N8 nitrogen atoms of 7,8-diaminopelargonic acid (DAPA, also called 7,8-diammoniononanoate) to form a ureido ring. This Clostridium novyi (strain NT) protein is ATP-dependent dethiobiotin synthetase BioD.